Here is a 417-residue protein sequence, read N- to C-terminus: Frizzy aggregation protein FrzCD (417 aa).

Basic and acidic residues predominate over residues 1–11 (MSLDTPNEKPA). Residues 1–34 (MSLDTPNEKPAGKARARKAPASKAGATNAASTSS) form a disordered region. The span at 21–34 (ASKAGATNAASTSS) shows a compositional bias: low complexity. The region spanning 144 to 380 (AALRLSSSAN…QVVASMAEIE (237 aa)) is the Methyl-accepting transducer domain.

Belongs to the methyl-accepting chemotaxis (MCP) protein family. In terms of processing, methylated. Saturated fatty acids capric acid and lauric acid stimulate methylation. Short-chain alcohols, such as isoamyl alcohol, and some other solvents cause demethylation.

It is found in the cytoplasm. Functionally, methyl-accepting taxis protein necessary for the proper aggregation of cells to form fruiting bodies. Frz genes define a system of signal transduction analogous to the enterobacterial chemotaxis systems. The chain is Frizzy aggregation protein FrzCD (frzCD) from Myxococcus xanthus.